Consider the following 332-residue polypeptide: L-lactate dehydrogenase A chain (332 aa).

NAD(+) contacts are provided by residues 29–57 and R99; that span reads GMVGMASAVSILLKDLCDELALVDVMEDK. The substrate site is built by R106, N138, and R169. N138 is a binding site for NAD(+). The active-site Proton acceptor is H193. T248 lines the substrate pocket.

Belongs to the LDH/MDH superfamily. LDH family. As to quaternary structure, homotetramer.

The protein resides in the cytoplasm. It carries out the reaction (S)-lactate + NAD(+) = pyruvate + NADH + H(+). The protein operates within fermentation; pyruvate fermentation to lactate; (S)-lactate from pyruvate: step 1/1. Its function is as follows. Interconverts simultaneously and stereospecifically pyruvate and lactate with concomitant interconversion of NADH and NAD(+). The polypeptide is L-lactate dehydrogenase A chain (ldha) (Sphyraena idiastes (Pelican barracuda)).